Here is a 202-residue protein sequence, read N- to C-terminus: ATP-dependent Clp protease proteolytic subunit 1 (202 aa).

Ser99 functions as the Nucleophile in the catalytic mechanism. His123 is an active-site residue.

The protein belongs to the peptidase S14 family. In terms of assembly, fourteen ClpP subunits assemble into 2 heptameric rings which stack back to back to give a disk-like structure with a central cavity, resembling the structure of eukaryotic proteasomes.

The protein localises to the cytoplasm. The enzyme catalyses Hydrolysis of proteins to small peptides in the presence of ATP and magnesium. alpha-casein is the usual test substrate. In the absence of ATP, only oligopeptides shorter than five residues are hydrolyzed (such as succinyl-Leu-Tyr-|-NHMec, and Leu-Tyr-Leu-|-Tyr-Trp, in which cleavage of the -Tyr-|-Leu- and -Tyr-|-Trp bonds also occurs).. Its function is as follows. Cleaves peptides in various proteins in a process that requires ATP hydrolysis. Has a chymotrypsin-like activity. Plays a major role in the degradation of misfolded proteins. This chain is ATP-dependent Clp protease proteolytic subunit 1, found in Symbiobacterium thermophilum (strain DSM 24528 / JCM 14929 / IAM 14863 / T).